The sequence spans 156 residues: MKKVRLTREGYEKLKKELEDLKRKFMYEISERIKEARELGDLSENSEYEAAKNEQGRVGSRIMEIEQILSNAEIIEDSEESDEVTLGKWVVIKNLDTGEEHKFRIVTPQEADFFAQKLSSDSPLGKSLLGRKVGDVVKVKAPSGVQRYQVMAVMNK.

Residues 1-32 are a coiled coil; it reads MKKVRLTREGYEKLKKELEDLKRKFMYEISER.

Belongs to the GreA/GreB family.

Its function is as follows. Necessary for efficient RNA polymerase transcription elongation past template-encoded arresting sites. The arresting sites in DNA have the property of trapping a certain fraction of elongating RNA polymerases that pass through, resulting in locked ternary complexes. Cleavage of the nascent transcript by cleavage factors such as GreA or GreB allows the resumption of elongation from the new 3'terminus. GreA releases sequences of 2 to 3 nucleotides. This is Transcription elongation factor GreA from Thermotoga petrophila (strain ATCC BAA-488 / DSM 13995 / JCM 10881 / RKU-1).